The sequence spans 235 residues: Glycerol uptake facilitator protein 2 (235 aa).

6 helical membrane passes run 4–24 (FLGE…SGAA), 39–59 (FICL…GQFG), 62–82 (GHLN…PMAN), 83–103 (VWPY…IVII), 134–154 (VFNF…LLNL), and 165–185 (MVGL…GFAI). The short motif at 65-67 (NPA) is the NPA 1 element. Residues 186–188 (NPA) carry the NPA 2 motif. A helical membrane pass occupies residues 210 to 230 (WGYAWVPMFGPLLGGILAAGL).

Belongs to the MIP/aquaporin (TC 1.A.8) family.

It is found in the cell membrane. Transporter that facilitates the transmembrane diffusion of water, dihydroxyacetone, glycerol and H(2)O(2). Is not permeable to urea and D/L-lactic acid. This is Glycerol uptake facilitator protein 2 from Lactiplantibacillus plantarum (strain ATCC BAA-793 / NCIMB 8826 / WCFS1) (Lactobacillus plantarum).